We begin with the raw amino-acid sequence, 806 residues long: Protein bimA (806 aa).

TPR repeat units lie at residues 76–109 and 127–160; these read LGCSYVYAQACLDLGKYTDGINALERSKGQWTSR and AAVLCLQGKLWQAHKEHNKAVECYAAALKLNPFM. 3 disordered regions span residues 202–348, 353–372, and 401–460; these read VLPP…HRLG, TVSGQVAHPSVPHSTDQGVG, and REVK…ASSK. Residues 224–237 show a composition bias toward polar residues; it reads AGTTRSDSTSTHGS. Low complexity predominate over residues 246 to 257; the sequence is GSTVSVASSGTG. The bimA domain stretch occupies residues 260-399; that stretch reads LPREGMETPG…ISSTALGVKE (140 aa). Residues 328–348 show a composition bias toward basic and acidic residues; sequence TKFESDEGHTERDAGMGHRLG. Positions 408-421 are enriched in polar residues; sequence TTGNKARTTTSSNV. Basic and acidic residues predominate over residues 432–445; sequence HAGEIHDGDSKEYR. Over residues 446-459 the composition is skewed to low complexity; sequence GTSSTSNGSQNASS. TPR repeat units follow at residues 513–546, 581–614, 616–648, 649–682, 684–716, and 751–784; these read PWVLAQIGRAYYEQAMYTEAEKYFVRVKAMAPSR, PEAWCAVGNSFSHQRDHDQALKCFKRATQLDPHF, YGFTLQGHEYVANEEYDKALDAYRSGINADSRH, YNAWYGLGTVYDKMGKLDFAEQHFRNAAKINPSN, VLICCIGLVLEKMNNPKSALIQYNRACTLAPHS, and ANVHYLLGKLYKMLRDKGNAIKHFTTALNLDPKA.

This sequence belongs to the APC3/CDC27 family.

The protein resides in the nucleus. In terms of biological role, required for the completion of mitosis in Aspergillus nidulans. The polypeptide is Protein bimA (bimA) (Emericella nidulans (strain FGSC A4 / ATCC 38163 / CBS 112.46 / NRRL 194 / M139) (Aspergillus nidulans)).